The chain runs to 310 residues: Tagatose-6-phosphate kinase (310 aa).

It belongs to the carbohydrate kinase PfkB family. LacC subfamily.

It carries out the reaction D-tagatofuranose 6-phosphate + ATP = D-tagatofuranose 1,6-bisphosphate + ADP + H(+). Its pathway is carbohydrate metabolism; D-tagatose 6-phosphate degradation; D-glyceraldehyde 3-phosphate and glycerone phosphate from D-tagatose 6-phosphate: step 1/2. This Staphylococcus aureus (strain USA300 / TCH1516) protein is Tagatose-6-phosphate kinase.